The primary structure comprises 153 residues: UPF0260 protein Plav_0898 (153 aa).

It belongs to the UPF0260 family.

This chain is UPF0260 protein Plav_0898, found in Parvibaculum lavamentivorans (strain DS-1 / DSM 13023 / NCIMB 13966).